Reading from the N-terminus, the 893-residue chain is TBC domain-containing protein kinase-like protein (893 aa).

A Protein kinase domain is found at 1–274 (MFPLRDTEMG…EELMHDHLFS (274 aa)). The region spanning 466 to 651 (DIPPLLRGIT…HLWDTLLLGN (186 aa)) is the Rab-GAP TBC domain. In terms of domain architecture, Rhodanese spans 790 to 889 (SKPKLLVVDI…IKPTGLLTVP (100 aa)).

It belongs to the protein kinase superfamily. Component of the FERRY complex.

It is found in the cytoplasm. The protein resides in the cytoskeleton. Its subcellular location is the spindle. The protein localises to the midbody. It localises to the early endosome. Its function is as follows. Component of the FERRY complex (Five-subunit Endosomal Rab5 and RNA/ribosome intermediary). The FERRY complex directly interacts with mRNAs and RAB5A, and functions as a RAB5A effector involved in the localization and the distribution of specific mRNAs most likely by mediating their endosomal transport. The complex recruits mRNAs and ribosomes to early endosomes through direct mRNA-interaction. Also involved in the modulation of mTOR signaling and expression of mTOR complex components. Involved in the control of actin-cytoskeleton organization. The polypeptide is TBC domain-containing protein kinase-like protein (Gallus gallus (Chicken)).